The chain runs to 476 residues: Trigger factor (476 aa).

Residues 174–261 (GDIAVVSFKG…LKDLKEKELP (88 aa)) form the PPIase FKBP-type domain. Residues 436 to 476 (KENTTKTSKTTKNSKTTKATKTTKTTKTTKTSKTQNKKEKK) form a disordered region. Low complexity predominate over residues 440–469 (TKTSKTTKNSKTTKATKTTKTTKTTKTSKT).

This sequence belongs to the FKBP-type PPIase family. Tig subfamily.

Its subcellular location is the cytoplasm. The catalysed reaction is [protein]-peptidylproline (omega=180) = [protein]-peptidylproline (omega=0). Involved in protein export. Acts as a chaperone by maintaining the newly synthesized protein in an open conformation. Functions as a peptidyl-prolyl cis-trans isomerase. In Prochlorococcus marinus (strain MIT 9215), this protein is Trigger factor.